The chain runs to 188 residues: Elongation factor P (188 aa).

It belongs to the elongation factor P family.

The protein localises to the cytoplasm. It functions in the pathway protein biosynthesis; polypeptide chain elongation. Functionally, involved in peptide bond synthesis. Stimulates efficient translation and peptide-bond synthesis on native or reconstituted 70S ribosomes in vitro. Probably functions indirectly by altering the affinity of the ribosome for aminoacyl-tRNA, thus increasing their reactivity as acceptors for peptidyl transferase. The protein is Elongation factor P of Leptospira biflexa serovar Patoc (strain Patoc 1 / Ames).